The sequence spans 122 residues: MERIPSLASLVSLLIIFATVVNQTRASICNDRLGLCDGCDQRCKAKHGPSCESKCDGPVGMLLCTCTYECGPTKLCNGGLGNCGESCNEQCCDRNCAQRYNGGHGYCNTLDDFSLCLCKYPC.

The N-terminal stretch at 1-26 (MERIPSLASLVSLLIIFATVVNQTRA) is a signal peptide. 8 disulfide bridges follow: Cys-29/Cys-70, Cys-36/Cys-55, Cys-39/Cys-64, Cys-43/Cys-66, Cys-76/Cys-122, Cys-87/Cys-107, Cys-92/Cys-116, and Cys-96/Cys-118.

This sequence belongs to the DEFL family.

The protein localises to the secreted. Confers broad-spectrum resistance to pathogens. This chain is Defensin-like protein 181 (PDF3.1), found in Arabidopsis thaliana (Mouse-ear cress).